A 209-amino-acid chain; its full sequence is Thiamine-phosphate synthase (209 aa).

4-amino-2-methyl-5-(diphosphooxymethyl)pyrimidine-binding positions include 35–39 (QYRDK) and asparagine 67. Mg(2+) contacts are provided by aspartate 68 and aspartate 86. Threonine 105 is a binding site for 4-amino-2-methyl-5-(diphosphooxymethyl)pyrimidine. Residue 132-134 (SNT) coordinates 2-[(2R,5Z)-2-carboxy-4-methylthiazol-5(2H)-ylidene]ethyl phosphate. Residue lysine 135 coordinates 4-amino-2-methyl-5-(diphosphooxymethyl)pyrimidine. Glycine 162 is a 2-[(2R,5Z)-2-carboxy-4-methylthiazol-5(2H)-ylidene]ethyl phosphate binding site.

The protein belongs to the thiamine-phosphate synthase family. Mg(2+) is required as a cofactor.

It catalyses the reaction 2-[(2R,5Z)-2-carboxy-4-methylthiazol-5(2H)-ylidene]ethyl phosphate + 4-amino-2-methyl-5-(diphosphooxymethyl)pyrimidine + 2 H(+) = thiamine phosphate + CO2 + diphosphate. The catalysed reaction is 2-(2-carboxy-4-methylthiazol-5-yl)ethyl phosphate + 4-amino-2-methyl-5-(diphosphooxymethyl)pyrimidine + 2 H(+) = thiamine phosphate + CO2 + diphosphate. It carries out the reaction 4-methyl-5-(2-phosphooxyethyl)-thiazole + 4-amino-2-methyl-5-(diphosphooxymethyl)pyrimidine + H(+) = thiamine phosphate + diphosphate. Its pathway is cofactor biosynthesis; thiamine diphosphate biosynthesis; thiamine phosphate from 4-amino-2-methyl-5-diphosphomethylpyrimidine and 4-methyl-5-(2-phosphoethyl)-thiazole: step 1/1. Its function is as follows. Condenses 4-methyl-5-(beta-hydroxyethyl)thiazole monophosphate (THZ-P) and 2-methyl-4-amino-5-hydroxymethyl pyrimidine pyrophosphate (HMP-PP) to form thiamine monophosphate (TMP). In Pseudomonas fluorescens (strain SBW25), this protein is Thiamine-phosphate synthase.